Reading from the N-terminus, the 304-residue chain is MNKEIQQAKHSKNINKPFTDKDSIRVSVLSEALPYIQRFANKRIVIKYGGSAMADKTLQNAVFRDLALLSSVGVQIVVVHGGGPEINQWLEKLGIKPVFLDGLRITDTETMDVVEMVLTGRVNKQIVSGINNHGRLAVGLCGIDGGLIEARTLGGGSHGLVGEVAKVNTKILSPLLEEGYVPVISSVANSSDGKSHNINADTVAGELAAALGAEKLILLTDTPGILRNENDPSSLIEKIRLSEARELIDKGIVKAGMKPKVECCIRSLAQGVNAAHIIDGRTPHSLLLEVFTDAGIGTMVMGRG.

Substrate is bound by residues 82–83, R104, and N197; that span reads GG.

It belongs to the acetylglutamate kinase family. ArgB subfamily.

Its subcellular location is the cytoplasm. The catalysed reaction is N-acetyl-L-glutamate + ATP = N-acetyl-L-glutamyl 5-phosphate + ADP. It functions in the pathway amino-acid biosynthesis; L-arginine biosynthesis; N(2)-acetyl-L-ornithine from L-glutamate: step 2/4. Its function is as follows. Catalyzes the ATP-dependent phosphorylation of N-acetyl-L-glutamate. In Prochlorococcus marinus (strain NATL2A), this protein is Acetylglutamate kinase.